The following is a 545-amino-acid chain: Methionine--tRNA ligase (545 aa).

The 'HIGH' region motif lies at 12-22 (PYANGSLHIGH). Zn(2+) contacts are provided by C143, C146, C156, and C159. The 'KMSKS' region signature appears at 329-333 (KLSKS). K332 provides a ligand contact to ATP.

It belongs to the class-I aminoacyl-tRNA synthetase family. MetG type 1 subfamily. As to quaternary structure, monomer. Zn(2+) is required as a cofactor.

The protein resides in the cytoplasm. The catalysed reaction is tRNA(Met) + L-methionine + ATP = L-methionyl-tRNA(Met) + AMP + diphosphate. In terms of biological role, is required not only for elongation of protein synthesis but also for the initiation of all mRNA translation through initiator tRNA(fMet) aminoacylation. The protein is Methionine--tRNA ligase (metG) of Buchnera aphidicola subsp. Baizongia pistaciae (strain Bp).